We begin with the raw amino-acid sequence, 238 residues long: ATP synthase subunit O, mitochondrial (238 aa).

The N-terminal 36 residues, 1 to 36 (MANRFRSGISFFKTIAVTDSVSSVRSKSLFPALRTY), are a transit peptide targeting the mitochondrion. T90 carries the phosphothreonine modification.

Belongs to the ATPase delta chain family. In terms of assembly, F-type ATPases have 2 components, CF(1) - the catalytic core - and CF(0) - the membrane proton channel. CF(1) has five subunits: alpha(3), beta(3), gamma(1), delta(1), epsilon(1). CF(0) has three main subunits: a, b and c.

Its subcellular location is the mitochondrion. It is found in the mitochondrion inner membrane. Functionally, mitochondrial membrane ATP synthase (F(1)F(0) ATP synthase or Complex V) produces ATP from ADP in the presence of a proton gradient across the membrane which is generated by electron transport complexes of the respiratory chain. F-type ATPases consist of two structural domains, F(1) - containing the extramembraneous catalytic core and F(0) - containing the membrane proton channel, linked together by a central stalk and a peripheral stalk. During catalysis, ATP synthesis in the catalytic domain of F(1) is coupled via a rotary mechanism of the central stalk subunits to proton translocation. Part of the complex F(0) domain and the peripheric stalk, which acts as a stator to hold the catalytic alpha(3)beta(3) subcomplex and subunit a/ATP6 static relative to the rotary elements. In Arabidopsis thaliana (Mouse-ear cress), this protein is ATP synthase subunit O, mitochondrial.